Reading from the N-terminus, the 649-residue chain is Replication factor C small subunit (649 aa).

55-385 (GPAGVGKCVT…GCIPTVMHNT (331 aa)) lines the ATP pocket.

This sequence belongs to the activator 1 small subunits family. RfcS subfamily. In terms of assembly, heteromultimer composed of small subunits (RfcS) and large subunits (RfcL). Post-translationally, this protein undergoes a protein self splicing that involves a post-translational excision of the intervening region (intein) followed by peptide ligation.

Part of the RFC clamp loader complex which loads the PCNA sliding clamp onto DNA. The protein is Replication factor C small subunit (rfcS) of Haloquadratum walsbyi (strain DSM 16790 / HBSQ001).